An 88-amino-acid polypeptide reads, in one-letter code: Large ribosomal subunit protein bL27 (88 aa).

The disordered stretch occupies residues 1–24 (MAHKKAGGSSRNGRDSAGQRRGVK).

This sequence belongs to the bacterial ribosomal protein bL27 family.

This chain is Large ribosomal subunit protein bL27, found in Syntrophobacter fumaroxidans (strain DSM 10017 / MPOB).